We begin with the raw amino-acid sequence, 316 residues long: Vacuolar morphogenesis protein 7 (316 aa).

Residues 1 to 124 enclose the PX domain; it reads MAANSVGKMS…QDFLQLSKPN (124 aa). Positions 168-186 form a coiled coil; that stretch reads RARTKLHKLRERLEQDVQK. The 63-residue stretch at 250 to 312 folds into the t-SNARE coiled-coil homology domain; it reads MQMVRDQEQE…QIANKKARHF (63 aa).

Possibly multimeric. Associates with VAM3.

Its subcellular location is the vacuole. Its function is as follows. Essential for proper morphogenesis of the vacuole. May exist as structural reinforcement on the surface of the vacuolar membrane and be required for maintenance against rupture by osmotic pressure. The chain is Vacuolar morphogenesis protein 7 (VAM7) from Saccharomyces cerevisiae (strain ATCC 204508 / S288c) (Baker's yeast).